The primary structure comprises 178 residues: Relaxin-like protein SQ10 (178 aa).

Residues 1 to 20 (MPALLFYLLGFCLLQGQVTG) form the signal peptide. Disulfide bonds link Cys-34–Cys-165, Cys-46–Cys-178, and Cys-164–Cys-169. Residues 54-150 (ESPSPENPFL…SSASESNTFS (97 aa)) constitute a propeptide, connecting peptide.

It belongs to the insulin family. Heterodimer of a B chain and an A chain linked by two disulfide bonds.

The protein resides in the secreted. This Oryctolagus cuniculus (Rabbit) protein is Relaxin-like protein SQ10.